The sequence spans 206 residues: Pyridoxal 5'-phosphate synthase subunit PdxT (206 aa).

59–61 (GES) lines the L-glutamine pocket. The Nucleophile role is filled by C91. L-glutamine is bound by residues R123 and 151–152 (IR). Catalysis depends on charge relay system residues H187 and E189.

It belongs to the glutaminase PdxT/SNO family. As to quaternary structure, in the presence of PdxS, forms a dodecamer of heterodimers. Only shows activity in the heterodimer.

The catalysed reaction is aldehydo-D-ribose 5-phosphate + D-glyceraldehyde 3-phosphate + L-glutamine = pyridoxal 5'-phosphate + L-glutamate + phosphate + 3 H2O + H(+). It carries out the reaction L-glutamine + H2O = L-glutamate + NH4(+). Its pathway is cofactor biosynthesis; pyridoxal 5'-phosphate biosynthesis. In terms of biological role, catalyzes the hydrolysis of glutamine to glutamate and ammonia as part of the biosynthesis of pyridoxal 5'-phosphate. The resulting ammonia molecule is channeled to the active site of PdxS. This Mycobacterium sp. (strain JLS) protein is Pyridoxal 5'-phosphate synthase subunit PdxT.